Here is a 385-residue protein sequence, read N- to C-terminus: Prostacyclin receptor (385 aa).

The Extracellular portion of the chain corresponds to 1–16 (MADSCRNLTYVRDSVG). Intrachain disulfides connect Cys-5–Cys-165 and Cys-92–Cys-170. Asn-7 is a glycosylation site (N-linked (GlcNAc...) asparagine). Residues 17–38 (PATSTLMFVAGVVGNGLALGIL) traverse the membrane as a helical segment. Topologically, residues 39–51 (GARRHSRPSAFAV) are cytoplasmic. A helical membrane pass occupies residues 52 to 76 (LVTGLGVTDLLGTCFLSPAVFAAYA). Topologically, residues 77 to 94 (RNSSLLGLARGRPALCDA) are extracellular. The helical transmembrane segment at 95 to 115 (FAFAMTFFGLASTLILFAMAV) threads the bilayer. Residues 116 to 134 (ERCLALSHPYLYAQLDGPR) are Cytoplasmic-facing. Residues 135-158 (RARLALPAIYAFCTIFCSLPFLGL) form a helical membrane-spanning segment. Residues 159–181 (GQHQQYCPGSWCFIRMRSAEPGG) are Extracellular-facing. A helical transmembrane segment spans residues 182–208 (CAFLLAYASLVALLVAAIVLCNGSVTL). Topologically, residues 209-234 (SLCRMYRQQRRHQARCPRPRAGEDEV) are cytoplasmic. A helical membrane pass occupies residues 235 to 259 (DHLILLALMTGIMAVCSLPLTPQIR). Topologically, residues 260-273 (GFTQAIAPDSSEMG) are extracellular. A helical membrane pass occupies residues 274-294 (DLLAFRFNAFNPILDPWVFIL). At 295–385 (FRKSVFQRLK…AGSEAACSLC (91 aa)) the chain is on the cytoplasmic side. A disordered region spans residues 315-344 (AQGDSRTSLSQSASGRKDSSAPPALEGKKG). Over residues 318 to 328 (DSRTSLSQSAS) the composition is skewed to polar residues. Cysteine methyl ester is present on Cys-382. A lipid anchor (S-farnesyl cysteine) is attached at Cys-382. The propeptide at 383 to 385 (SLC) is removed in mature form.

The protein belongs to the G-protein coupled receptor 1 family. As to quaternary structure, interacts (non-isoprenylated C-terminus) with PDZK1. In terms of processing, isoprenylation does not influence ligand binding but is required for efficient coupling to the effectors adenylyl cyclase and phospholipase C.

It is found in the cell membrane. Receptor for prostacyclin (prostaglandin I2 or PGI2). The activity of this receptor is mediated by G(s) proteins which activate adenylate cyclase. This is Prostacyclin receptor (PTGIR) from Bos taurus (Bovine).